A 1128-amino-acid chain; its full sequence is Glutamate receptor-interacting protein 1 (1128 aa).

Ser-43 carries the post-translational modification Phosphoserine. 6 consecutive PDZ domains span residues 53–136 (VVEL…EYEL), 150–238 (TVEV…EYDV), 252–336 (LVEV…LPHH), 472–561 (EVVL…EFDV), 573–658 (HVKL…RKDE), and 673–755 (TVEL…KKQT). 2 disordered regions span residues 754 to 798 (QTDA…YPST) and 935 to 981 (MSLN…GRKS). Residues 944-974 (PRSQLGRQASFQERSSSRPHYSQTTRSNTLP) are compositionally biased toward polar residues. The region spanning 1004–1086 (KVTLYKDSDM…KLDLVISRNP (83 aa)) is the PDZ 7 domain. The span at 1093–1115 (IDQQSLPGDWSEQNSAFFQQPSH) shows a compositional bias: polar residues. A disordered region spans residues 1093-1128 (IDQQSLPGDWSEQNSAFFQQPSHGGNLETREPTNTL).

In terms of assembly, interacts with EPHA7, EPHB2, KIF5A, KIF5B, KIF5C, GRIA2, GRIA3, GRIPAP1/GRASP1, PPFIA1, PPFIA4, FRAS1, PLCD4, PTPRF and liprins-alpha. Can form homomultimers or heteromultimers with GRIP2. Forms a ternary complex with GRIA2 and CSPG4. Interacts with ATAD1 in an ATP-dependent manner. ATAD1-catalyzed ATP hydrolysis disrupts binding to ATAD1 and to GRIA2 and leads to AMPAR complex disassembly. Interacts with EFNB1, EFNB3 and the C-terminal tail of PRLHR. Interacts with SLC30A9. Interacts with BUD23. Forms a complex with NSG1, GRIA2 and STX12; controls the intracellular fate of AMPAR and the endosomal sorting of the GRIA2 subunit toward recycling and membrane targeting. Interacts with NSG1.

It localises to the cytoplasmic vesicle. It is found in the perikaryon. The protein resides in the cell projection. Its subcellular location is the dendrite. The protein localises to the cytoplasm. It localises to the endomembrane system. It is found in the postsynaptic cell membrane. The protein resides in the postsynaptic density. Its subcellular location is the endoplasmic reticulum membrane. In terms of biological role, may play a role as a localized scaffold for the assembly of a multiprotein signaling complex and as mediator of the trafficking of its binding partners at specific subcellular location in neurons. Through complex formation with NSG1, GRIA2 and STX12 controls the intracellular fate of AMPAR and the endosomal sorting of the GRIA2 subunit toward recycling and membrane targeting. In Homo sapiens (Human), this protein is Glutamate receptor-interacting protein 1 (GRIP1).